A 379-amino-acid chain; its full sequence is S-adenosylmethionine decarboxylase proenzyme (379 aa).

Residues glutamate 30 and glutamate 33 contribute to the active site. Serine 96 serves as the catalytic Schiff-base intermediate with substrate; via pyruvic acid. Serine 96 bears the Pyruvic acid (Ser); by autocatalysis mark. The Proton donor; for catalytic activity role is filled by cysteine 110. Catalysis depends on proton acceptor; for processing activity residues serine 254 and histidine 267.

The protein belongs to the eukaryotic AdoMetDC family. As to quaternary structure, heterotetramer of two alpha and two beta chains. Pyruvate is required as a cofactor. Is synthesized initially as an inactive proenzyme. Formation of the active enzyme involves a self-maturation process in which the active site pyruvoyl group is generated from an internal serine residue via an autocatalytic post-translational modification. Two non-identical subunits are generated from the proenzyme in this reaction, and the pyruvate is formed at the N-terminus of the alpha chain, which is derived from the carboxyl end of the proenzyme. The post-translation cleavage follows an unusual pathway, termed non-hydrolytic serinolysis, in which the side chain hydroxyl group of the serine supplies its oxygen atom to form the C-terminus of the beta chain, while the remainder of the serine residue undergoes an oxidative deamination to produce ammonia and the pyruvoyl group blocking the N-terminus of the alpha chain.

It catalyses the reaction S-adenosyl-L-methionine + H(+) = S-adenosyl 3-(methylsulfanyl)propylamine + CO2. The protein operates within amine and polyamine biosynthesis; S-adenosylmethioninamine biosynthesis; S-adenosylmethioninamine from S-adenosyl-L-methionine: step 1/1. Functionally, S-adenosylmethionine decarboxylase is essential for the biosynthesis of spermine and spermidine. The alpha subunit contains the active site. The chain is S-adenosylmethionine decarboxylase proenzyme (amd1) from Dictyostelium discoideum (Social amoeba).